The following is a 283-amino-acid chain: ATP phosphoribosyltransferase (283 aa).

It belongs to the ATP phosphoribosyltransferase family. Long subfamily. The cofactor is Mg(2+).

It is found in the cytoplasm. It carries out the reaction 1-(5-phospho-beta-D-ribosyl)-ATP + diphosphate = 5-phospho-alpha-D-ribose 1-diphosphate + ATP. It functions in the pathway amino-acid biosynthesis; L-histidine biosynthesis; L-histidine from 5-phospho-alpha-D-ribose 1-diphosphate: step 1/9. With respect to regulation, feedback inhibited by histidine. Functionally, catalyzes the condensation of ATP and 5-phosphoribose 1-diphosphate to form N'-(5'-phosphoribosyl)-ATP (PR-ATP). Has a crucial role in the pathway because the rate of histidine biosynthesis seems to be controlled primarily by regulation of HisG enzymatic activity. The chain is ATP phosphoribosyltransferase from Phocaeicola vulgatus (strain ATCC 8482 / DSM 1447 / JCM 5826 / CCUG 4940 / NBRC 14291 / NCTC 11154) (Bacteroides vulgatus).